Here is a 2494-residue protein sequence, read N- to C-terminus: Nuclear receptor corepressor 1 (2494 aa).

Positions 1–33 are enriched in polar residues; the sequence is MSSSGYPPNQGAFSTEQGRYSSHPVQYTFPSSR. Disordered regions lie at residues 1–38, 53–106, 134–170, and 198–222; these read MSSSGYPPNQGAFSTEQGRYSSHPVQYTFPSSRHQQEF, LLQQ…PRLD, SEVKKEQGLPSKHETTSSPLSGQPGEEQEASPSKLSK, and QQQLEEEAAKPPEPEKPVSPPPVEQ. Basic and acidic residues predominate over residues 71 to 82; it reads PVSDRPQDRRQG. A compositionally biased stretch (polar residues) spans 83-92; the sequence is YEQQYHSVTQ. Composition is skewed to basic and acidic residues over residues 93–106, 134–148, and 204–213; these read NEHEALESKRPRLD, SEVKKEQGLPSKHET, and EAAKPPEPEK. The segment at 154-304 is interaction with tbl1xr1; the sequence is SGQPGEEQEA…REQNICQRYD (151 aa). Residues 168 to 208 adopt a coiled-coil conformation; it reads LSKEELIQSMDRVDREIAKVEQQILKLKKKQQQLEEEAAKP. An SANT 1 domain is found at 427–478; the sequence is QFMNVWTDHEKEIFKEKFVQHPKNFGLIASYLERKTVSDCVLYYYLTKKNEN. 8 disordered regions span residues 488-638, 671-913, 981-1007, 1081-1124, 1413-1434, 1488-1585, 1745-1845, and 1912-1987; these read PKRR…VEHG, NLLQ…LDSK, RQRQEQLSLESRMSASPGNMSKSPNMD, GARL…GTPG, IHEIPRQDLGSQESRKTPESSR, MGER…TQRE, LAFP…QESI, and EVVK…AHTK. Composition is skewed to basic and acidic residues over residues 502-525 and 535-548; these read AQEEKEIEKVEEEKAERNDKKEEE and KEELRDGTKDRTDA. The stretch at 502-549 forms a coiled coil; that stretch reads AQEEKEIEKVEEEKAERNDKKEEERREEEEKEEKEELRDGTKDRTDAI. Residues 582-616 show a composition bias toward low complexity; the sequence is ASEAAAAANAASTATTAPATTTSTTATTTTAALVP. Residues 617-629 show a composition bias toward pro residues; that stretch reads VAPPPEEPTPPPT. The SANT 2 domain maps to 622–668; that stretch reads EEPTPPPTQEQSLVEHGRNWGAIAKMVGSKSESQCKNFYFNYKRRHN. Residues 692–702 show a composition bias toward polar residues; it reads QCESVASTVSA. Positions 698 to 726 form a coiled coil; sequence STVSAQEDEENEASNEEENAEDSEGAENS. Positions 703–722 are enriched in acidic residues; it reads QEDEENEASNEEENAEDSEG. Residues 723 to 741 are compositionally biased toward low complexity; that stretch reads AENSSDTESAPSPSPAEAA. Residues 766 to 779 are compositionally biased toward polar residues; sequence ASKSVSDSSPTPTV. The span at 829 to 864 shows a compositional bias: basic and acidic residues; sequence AEPDEVESKPSESAEVKIEEDTKDQDMERLMDRAEA. Polar residues-rich tracts occupy residues 881-892, 993-1004, and 1104-1124; these read ESQSDNDSSATC, MSASPGNMSKSP, and ATSSDKPSFITGGSISQGTPG. The span at 1488–1504 shows a compositional bias: basic and acidic residues; it reads MGERSKYEDTKSSEAIR. The segment covering 1508 to 1519 has biased composition (polar residues); sequence TSVVSSGPSVLR. The segment covering 1548–1561 has biased composition (low complexity); that stretch reads PSPMSRSSPMARSA. Residues 1771–1810 adopt a coiled-coil conformation; that stretch reads VSAERERERERDRERDREREKEQRERERDRERERERLAAA. Basic and acidic residues predominate over residues 1773-1807; it reads AERERERERDRERDREREKEQRERERDRERERERL. Residues 1835–1845 show a composition bias toward polar residues; the sequence is PSPSVRAQESI. Residues 1914 to 1935 are compositionally biased toward basic and acidic residues; the sequence is VKPKEMKHDPARSEESLSRRNV. The segment covering 1953–1972 has biased composition (low complexity); that stretch reads QSPYTSSSFSGSKSQGQPSP. Residues 1978 to 1987 show a composition bias toward basic and acidic residues; the sequence is AGKEKTAHTK. Residues 2008-2012 carry the CORNR box 1 motif; the sequence is IDVII. Positions 2018-2105 are disordered; it reads SDKDGRDRNS…PSPQQTIPGH (88 aa). Positions 2027–2036 are enriched in low complexity; the sequence is SQSSDSSSSH. Over residues 2039 to 2048 the composition is skewed to basic and acidic residues; sequence HRYDAPRDTI. Positions 2088-2102 are enriched in polar residues; the sequence is RYRQQQESPSPQQTI. The CORNR box 2 motif lies at 2119 to 2123; it reads ICQII. Over residues 2135–2177 the composition is skewed to polar residues; sequence QALQQPPASTFQSTNPSSTPVRTKASSRFSPESQVQPVHNQRP. The disordered stretch occupies residues 2135–2216; sequence QALQQPPAST…YEPISPPQAP (82 aa). Over residues 2186-2205 the composition is skewed to basic and acidic residues; it reads VLDRPRGRPGKSPDRGHISE. Positions 2322–2326 match the CORNR box 3 motif; that stretch reads LEDII. Disordered stretches follow at residues 2346–2413 and 2446–2494; these read GVAQ…SVHS and MLNS…DSDE. Residues 2376–2390 show a composition bias toward basic residues; it reads HKQKLISKYGSRKTK. Polar residues-rich tracts occupy residues 2446-2472 and 2485-2494; these read MLNSTPPSSMSCAPTSMTQTSAHQQSR and QYETLSDSDE.

This sequence belongs to the N-CoR nuclear receptor corepressors family. As to quaternary structure, forms a large corepressor complex that contains sin3a/b, histone deacetylases hdac1 and hdac2, rbbp4 and possibly rbbp7. Interacts with the thyroid receptor (TR, composed of rxra and thrb) and the retinoid acid receptor (RAR, composed of rxra and rara) in the absence of ligand. Interacts with tbl1xr1. Interacts with zbtb33/kaiso.

Its subcellular location is the nucleus. Its function is as follows. Mediates transcriptional repression by certain nuclear receptors. Participates in complexes which promote histone deacetylation and the formation of repressive chromatin structures which may impede access by the basal transcription machinery. In association with hdac3, may play a role in the regulation of the circadian clock. This Xenopus tropicalis (Western clawed frog) protein is Nuclear receptor corepressor 1 (ncor1).